We begin with the raw amino-acid sequence, 1084 residues long: TNF receptor-associated factor family protein DDB_G0272098 (1084 aa).

Residues 19–103 enclose the LIM zinc-binding domain; the sequence is YYCPDCGELL…KNRYYETKNF (85 aa). TRAF-type zinc fingers lie at residues 122–190 and 191–248; these read KHIK…IDHE and IHLS…YNMS. Residues 265 to 321 adopt a coiled-coil conformation; that stretch reads IEEQNQDIKELHNFIENHLSKKFIDLDTIVNIQKYLIKNKNQKISQLTEIIKRVDNS. Disordered stretches follow at residues 348-392, 490-523, 537-656, and 709-897; these read YKNS…NINE, IRQQ…NTTI, NNNI…KDGL, and SIVE…NDDD. Low complexity-rich tracts occupy residues 349-375, 492-509, 537-549, and 556-570; these read KNSN…TNEN, QQQQ…QQQQ, NNNI…NNNK, and ITAA…TTST. The stretch at 489–553 forms a coiled coil; the sequence is LIRQQQQQQQ…NNNNNKNNDD (65 aa). A compositionally biased stretch (polar residues) spans 571–586; sequence HTILNGTNNEASMTDI. Low complexity predominate over residues 587 to 637; it reads NETTSTTTTAETTEATASESTEESNNTAETTTTTTTTTTTITTAAETVNST. Positions 644–656 are enriched in basic and acidic residues; sequence TSEKVEEKGKDGL. Residues 735 to 852 adopt a coiled-coil conformation; that stretch reads NGNENENENE…NNNNNNNENV (118 aa). A compositionally biased stretch (acidic residues) spans 739-757; it reads NENENENENENENENENEN. Positions 774–785 are enriched in polar residues; sequence SNINTSNDTEPT. Over residues 790–799 the composition is skewed to basic and acidic residues; the sequence is EDIKKNKENE. Over residues 809 to 849 the composition is skewed to low complexity; the sequence is NNNIKSVEDTNNNNNNNNNNNNNNNNNNNNNNNNNNNNNNN. Composition is skewed to basic and acidic residues over residues 853–864 and 875–892; these read YDIKKDRNRENV and ENGK…SEDK. Residues 909–1042 form the MATH domain; that stretch reads IFRNQILFKD…DNCFIVNLEV (134 aa). The segment at 1056 to 1084 is disordered; that stretch reads LLQKSSPPAATTTTTTSSSSSKTTPKTKR. A compositionally biased stretch (low complexity) spans 1059 to 1084; sequence KSSPPAATTTTTTSSSSSKTTPKTKR.

It belongs to the TNF receptor-associated factor family.

It localises to the cytoplasm. Probable adapter protein and signal transducer that links members of the tumor necrosis factor receptor family to different signaling pathways by association with the receptor cytoplasmic domain and kinases. This is TNF receptor-associated factor family protein DDB_G0272098 from Dictyostelium discoideum (Social amoeba).